A 146-amino-acid polypeptide reads, in one-letter code: Hemoglobin subunit beta/beta' (146 aa).

In terms of domain architecture, Globin spans 2 to 146 (HWSAEEKQLI…VAHALARKYH (145 aa)). Residues histidine 63 and histidine 92 each coordinate heme b.

It belongs to the globin family. In terms of assembly, heterotetramer of two alpha chains and two beta chains. As to expression, red blood cells.

In terms of biological role, involved in oxygen transport from the lung to the various peripheral tissues. This Chroicocephalus ridibundus (Black-headed gull) protein is Hemoglobin subunit beta/beta' (HBB).